The primary structure comprises 30 residues: U-actitoxin-Bcg2a (30 aa).

An intrachain disulfide couples cysteine 7 to cysteine 27.

It is found in the secreted. The protein resides in the nematocyst. Functionally, possible voltage-gated potassium channel (Kv) blocker. This chain is U-actitoxin-Bcg2a, found in Bunodosoma cangicum (Sea anemone).